Reading from the N-terminus, the 385-residue chain is MGILGLSKLIADLAPQAIRESEMKHFFGRKVAIDASMCLYQFLIAVRSEGAQLATVNGDPTSHLMGMFYRTIRLLDNGIKPVYVFDGKPPDLKSGELAKRAERREEAEKALKAATDAGDDAGIEKFNRRLVRVTKEHAKEAKELLTLMGVPYVDAPCEAEAQCAALVKAGKVYATATEDMDALTFGSTKLLRYLTYSEARKMPVKEFSYDKLLEGLAINNREFIDLCILLGCDYCESIKGIGPKRAIELINTYRDIETILDNLDSSKYTVPENWNYKVARELFIEPEVADADSIDLKWVEPDEEGLVKFLCGDRQFNEERVRNGAKKLMKSKQAQTQVRLDSFFKTLPSTPNATNAAKRKAEEAKKSANNKKAKTSGGGRGRRPK.

Residues 1–104 are N-domain; it reads MGILGLSKLI…GELAKRAERR (104 aa). Asp-34 provides a ligand contact to Mg(2+). DNA contacts are provided by Arg-47 and Arg-70. Positions 86, 158, 160, 179, and 181 each coordinate Mg(2+). The I-domain stretch occupies residues 122–253; the sequence is GIEKFNRRLV…KRAIELINTY (132 aa). Position 158 (Glu-158) interacts with DNA. Residues Gly-231 and Asp-233 each contribute to the DNA site. Residue Asp-233 coordinates Mg(2+). The interaction with PCNA stretch occupies residues 336–344; sequence TQVRLDSFF. Residues 346–385 are disordered; sequence TLPSTPNATNAAKRKAEEAKKSANNKKAKTSGGGRGRRPK. Residues 368–385 show a composition bias toward basic residues; sequence ANNKKAKTSGGGRGRRPK.

It belongs to the XPG/RAD2 endonuclease family. FEN1 subfamily. Interacts with PCNA. Three molecules of FEN1 bind to one PCNA trimer with each molecule binding to one PCNA monomer. PCNA stimulates the nuclease activity without altering cleavage specificity. The cofactor is Mg(2+). Post-translationally, phosphorylated. Phosphorylation upon DNA damage induces relocalization to the nuclear plasma.

The protein localises to the nucleus. Its subcellular location is the nucleolus. It localises to the nucleoplasm. It is found in the mitochondrion. Functionally, structure-specific nuclease with 5'-flap endonuclease and 5'-3' exonuclease activities involved in DNA replication and repair. During DNA replication, cleaves the 5'-overhanging flap structure that is generated by displacement synthesis when DNA polymerase encounters the 5'-end of a downstream Okazaki fragment. It enters the flap from the 5'-end and then tracks to cleave the flap base, leaving a nick for ligation. Also involved in the long patch base excision repair (LP-BER) pathway, by cleaving within the apurinic/apyrimidinic (AP) site-terminated flap. Acts as a genome stabilization factor that prevents flaps from equilibrating into structures that lead to duplications and deletions. Also possesses 5'-3' exonuclease activity on nicked or gapped double-stranded DNA, and exhibits RNase H activity. Also involved in replication and repair of rDNA and in repairing mitochondrial DNA. This chain is Flap endonuclease 1, found in Drosophila melanogaster (Fruit fly).